The chain runs to 578 residues: Glutamate--tRNA ligase (578 aa).

Residues 97–107 (PNPDFVIHLGN) carry the 'HIGH' region motif.

It belongs to the class-I aminoacyl-tRNA synthetase family. Glutamate--tRNA ligase type 2 subfamily.

Its subcellular location is the cytoplasm. It catalyses the reaction tRNA(Glu) + L-glutamate + ATP = L-glutamyl-tRNA(Glu) + AMP + diphosphate. Catalyzes the attachment of glutamate to tRNA(Glu) in a two-step reaction: glutamate is first activated by ATP to form Glu-AMP and then transferred to the acceptor end of tRNA(Glu). The sequence is that of Glutamate--tRNA ligase from Hyperthermus butylicus (strain DSM 5456 / JCM 9403 / PLM1-5).